A 296-amino-acid chain; its full sequence is Cleavage and polyadenylation specificity factor subunit 4 (296 aa).

C3H1-type zinc fingers lie at residues 35-63 (KSIA…RHIR), 64-91 (GDRT…HEYD), 92-119 (MTKM…HIDP), 120-147 (QSKV…HLRR), and 149-171 (LCMD…HPHF). The segment at 189 to 206 (PTCHYCGELGHKANSCKQ) adopts a CCHC-type 1 zinc-finger fold. Positions 222–254 (HSGGHSGGYSGHSGHIEGADDMQSNHHSQPHGP) are disordered. The segment at 266 to 283 (ITCYKCGNKGHYANKCPK) adopts a CCHC-type 2 zinc-finger fold.

Component of the cleavage and polyadenylation specificity factor (CPSF) complex, composed of at least Clp, Cpsf73, Cpsf100 and Cpsf160. In terms of tissue distribution, during oogenesis, expression is detected in the germarium, in nurse cells, in the oocyte, and in the somatically derived follicular epithelial cells (at protein level). At oogenesis stage 12, nurse cells degenerate and their content is transferred into the oocyte. In larvae, expressed in all organs and disks (at protein level). In the larval salivary gland, expression is initially confined to cells at the anterior end but later expands throughout the entire gland (at protein level).

The protein resides in the nucleus. In terms of biological role, component of the cleavage and polyadenylation specificity factor (CPSF) complex that plays a key role in pre-mRNA 3'-end formation, recognizing the AAUAAA signal sequence and interacting with poly(A) polymerase and other factors to bring about cleavage and poly(A) addition. Has endonuclease activity. Binds RNA polymers with a preference for G- and/or C-rich clusters. Binds single-stranded DNA non-specifically. The sequence is that of Cleavage and polyadenylation specificity factor subunit 4 (Clp) from Drosophila melanogaster (Fruit fly).